Here is a 305-residue protein sequence, read N- to C-terminus: T-cell immunoglobulin and mucin domain-containing protein 2 (305 aa).

Residues 1–21 (MNQIQVFISGLILLLPGAVES) form the signal peptide. An Ig-like V-type domain is found at 22 to 125 (HTAVQGLAGH…AFHFVDYMLE (104 aa)). At 22–231 (HTAVQGLAGH…QKPQKNLNKG (210 aa)) the chain is on the extracellular side. Cystine bridges form between Cys37–Cys109, Cys50–Cys61, and Cys56–Cys108. N-linked (GlcNAc...) asparagine glycosylation is found at Asn86 and Asn91. The segment at 130 to 174 (ISTSPPTRPTATGRPTTISTRSTHVPTSTRVSTSTSPTPAHTETY) is disordered. Residues 131 to 167 (STSPPTRPTATGRPTTISTRSTHVPTSTRVSTSTSPT) show a composition bias toward low complexity. Residues 232 to 252 (FYVGISIAALLILMLLSTMVI) form a helical membrane-spanning segment. Topologically, residues 253–305 (TRYVVMKRKSESLSFVAFPISKIGASPKKVVERTRCEDQVYIIEDTPYPEEES) are cytoplasmic.

It belongs to the immunoglobulin superfamily. TIM family. As to quaternary structure, homodimer. In terms of tissue distribution, expressed on late differentiated Th2 cells. Expressed also on all splenic B-cells, with increased levels on germinal center B-cells, in the liver, especially in bile duct epithelial cells, and in renal tubule cells. Within retina, mainly expressed in Mueller cells.

The protein localises to the cell membrane. Functionally, cell surface glycoprotein that participates in iron homeostasis in the liver, the kidney, the retina and oligodendrocytes by acting as a receptor of H-ferritin. Mechanistically, mediates iron-containing ferritin uptake via an endocytic pathway, trafficking to endosomes and subsequently to lysosomes. Plays also an important role in the regulation of Th2 immunity. Receptor for SEMA4A involved in the regulation of T-cell function, enhancing T-cell activation. The chain is T-cell immunoglobulin and mucin domain-containing protein 2 (Timd2) from Mus musculus (Mouse).